Reading from the N-terminus, the 424-residue chain is MAAVATCGSVAASTGSAVATASKSNVTSFQRRGPRASVTNDSGPRLVSIAGTRPSVRNGQLLVSTGLPALDQLLGGGLAVGTVLLIEEDKYNIYSPLLFKYFLAEGIVNGHTLLVASAKEDPANILQELPAPLLDDKCKKEFDEDVYNHKTPESNIKMKIAWRYQLLPKMEIGPVSSSRFGHYYDASKRMPQELIEASNWHGFFLPEKISSTLKVEPCSLTPGYTKLLQFIQNIIYEEGFDGSNPQKKQRNILRIGIQNLGSPLWGDDICCAENGGNSHSLTKFLYVLRGLLRTSLSACIITMPTHLIQNKAIIARVTTLSDVVVGLESFIGSERETNPLYKDYHGLIHIRQIPRLNNLICDESDVKDLAFKLKRKLFTIERLHLPPDLSDTVSRSSKMDLAESAKRLGPGCGMMAGGKKHLDF.

It belongs to the ELP4 family. Component of the elongator complex which consists of ELP1, ELP2, ELP3, ELP4, ELP5 and ELP6. Widely expressed.

It localises to the cytoplasm. The protein resides in the nucleus. It functions in the pathway tRNA modification; 5-methoxycarbonylmethyl-2-thiouridine-tRNA biosynthesis. Its function is as follows. Component of the elongator complex which is required for multiple tRNA modifications, including mcm5U (5-methoxycarbonylmethyl uridine), mcm5s2U (5-methoxycarbonylmethyl-2-thiouridine), and ncm5U (5-carbamoylmethyl uridine). The elongator complex catalyzes the formation of carboxymethyluridine in the wobble base at position 34 in tRNAs. This chain is Elongator complex protein 4 (ELP4), found in Homo sapiens (Human).